The following is a 163-amino-acid chain: Intron-encoded endonuclease I-PpoI (163 aa).

Homodimer. The cofactor is Zn(2+).

Mediates the homing of a group I intron in the ribosomal DNA. Makes a four-base staggered cut in its ribosomal DNA target sequence. The chain is Intron-encoded endonuclease I-PpoI from Physarum polycephalum (Slime mold).